The sequence spans 235 residues: Futalosine hydrolase (235 aa).

It belongs to the PNP/UDP phosphorylase family. Futalosine hydrolase subfamily.

The enzyme catalyses futalosine + H2O = dehypoxanthine futalosine + hypoxanthine. Its pathway is quinol/quinone metabolism; menaquinone biosynthesis. In terms of biological role, catalyzes the hydrolysis of futalosine (FL) to dehypoxanthine futalosine (DHFL) and hypoxanthine, a step in the biosynthesis of menaquinone (MK, vitamin K2). Does not accept aminodeoxyfutalosine (AFL) as a substrate. The chain is Futalosine hydrolase from Streptomyces coelicolor (strain ATCC BAA-471 / A3(2) / M145).